A 616-amino-acid chain; its full sequence is UvrABC system protein C (616 aa).

Positions 21 to 100 (TCPGVYQFKN…IKDLKPRYNI (80 aa)) constitute a GIY-YIG domain. The UVR domain occupies 214 to 249 (GALIRTLSAEMHRYADELRFEEAAELKIQIEGLRKY).

The protein belongs to the UvrC family. Interacts with UvrB in an incision complex.

It localises to the cytoplasm. Its function is as follows. The UvrABC repair system catalyzes the recognition and processing of DNA lesions. UvrC both incises the 5' and 3' sides of the lesion. The N-terminal half is responsible for the 3' incision and the C-terminal half is responsible for the 5' incision. The sequence is that of UvrABC system protein C from Prosthecochloris aestuarii (strain DSM 271 / SK 413).